We begin with the raw amino-acid sequence, 283 residues long: Elongation factor Ts (283 aa).

The involved in Mg(2+) ion dislocation from EF-Tu stretch occupies residues 82 to 85; it reads TDFV.

The protein belongs to the EF-Ts family.

It localises to the cytoplasm. Functionally, associates with the EF-Tu.GDP complex and induces the exchange of GDP to GTP. It remains bound to the aminoacyl-tRNA.EF-Tu.GTP complex up to the GTP hydrolysis stage on the ribosome. The sequence is that of Elongation factor Ts from Photorhabdus laumondii subsp. laumondii (strain DSM 15139 / CIP 105565 / TT01) (Photorhabdus luminescens subsp. laumondii).